Consider the following 372-residue polypeptide: MPNQHTLLSSNLLPVGSNISTWWNFGSMLLTCLALQTSTGFFLAIHYTANINLAFSSVIHILRDVPNGWIIQNLHAIGASMFFICIYTHIARGLYYGSYLNKEVWLSGTMLLIMLMATSFFGYVLPWGQMSFWAATVITNLLTAIPYLGTILTTWLWGGFSIDNPTLTRFFALHFILPFMIISLSSIHIILLHSEGSNNPLGTNPDTDKIPFHPYHSYKDTLMITAMITSMLIIMSFMPNLFNDPENFSKANPLVTPQHIKPEWYFLFAYGILRSIPNKLGGTLALLMSILILTTAPFTHTSYTRSMTFRPLTQIMFWTLIVTFITITWSATKPVEPPFIFISQTASIIYFSFFIINPLLGWVENKIMMTNN.

4 consecutive transmembrane segments (helical) span residues Phe-25–Ile-45, Trp-69–Ile-90, Trp-105–Leu-125, and Phe-170–Ile-190. Residues His-75 and His-89 each coordinate heme b. Heme b is bound by residues His-174 and His-188. Position 193 (His-193) interacts with a ubiquinone. Helical transmembrane passes span Tyr-218–Met-238, Leu-280–His-300, Leu-312–Thr-332, and Phe-339–Pro-358.

It belongs to the cytochrome b family. As to quaternary structure, the cytochrome bc1 complex contains 3 respiratory subunits (MT-CYB, CYC1 and UQCRFS1), 2 core proteins (UQCRC1 and UQCRC2) and probably 6 low-molecular weight proteins. It depends on heme b as a cofactor.

The protein resides in the mitochondrion inner membrane. Its function is as follows. Component of the ubiquinol-cytochrome c reductase complex (complex III or cytochrome b-c1 complex) that is part of the mitochondrial respiratory chain. The b-c1 complex mediates electron transfer from ubiquinol to cytochrome c. Contributes to the generation of a proton gradient across the mitochondrial membrane that is then used for ATP synthesis. In Hydrophis semperi (Lake Taal snake), this protein is Cytochrome b (MT-CYB).